The chain runs to 188 residues: Deoxyuridine 5'-triphosphate nucleotidohydrolase (188 aa).

Positions 1-34 (MGEMTSGVDGHGSTKRTTSEAQKMDFNTDRGSAI) are disordered.

This sequence belongs to the dUTPase family. It depends on Mg(2+) as a cofactor.

The enzyme catalyses dUTP + H2O = dUMP + diphosphate + H(+). Functionally, this enzyme is involved in nucleotide metabolism: it produces dUMP, the immediate precursor of thymidine nucleotides and it decreases the intracellular concentration of dUTP so that uracil cannot be incorporated into DNA. This Ictaluridae (bullhead catfishes) protein is Deoxyuridine 5'-triphosphate nucleotidohydrolase (49).